A 157-amino-acid polypeptide reads, in one-letter code: Ribosome maturation factor RimP (157 aa).

This sequence belongs to the RimP family.

It localises to the cytoplasm. Its function is as follows. Required for maturation of 30S ribosomal subunits. This Levilactobacillus brevis (strain ATCC 367 / BCRC 12310 / CIP 105137 / JCM 1170 / LMG 11437 / NCIMB 947 / NCTC 947) (Lactobacillus brevis) protein is Ribosome maturation factor RimP.